Consider the following 168-residue polypeptide: NADH dehydrogenase [ubiquinone] 1 alpha subcomplex assembly factor 2 (168 aa).

Residues 108-118 (KEKLLQEESNK) show a composition bias toward basic and acidic residues. Residues 108 to 168 (KEKLLQEESN…MPHGDKGHSQ (61 aa)) form a disordered region. Position 133 is a phosphoserine (S133). Polar residues predominate over residues 144–155 (ESPTSTGKTFQP).

It belongs to the complex I NDUFA12 subunit family. As to quaternary structure, interacts with ARMC9.

It is found in the mitochondrion. Its function is as follows. Acts as a molecular chaperone for mitochondrial complex I assembly. Complex I functions in the transfer of electrons from NADH to the respiratory chain. The immediate electron acceptor for the enzyme is believed to be ubiquinone. Is involved in the initial steps of cilia formation, including removal of CP110 from the mother centrioles, docking of membrane vesicles to the mother centrioles, and establishment of the transition zone. The protein is NADH dehydrogenase [ubiquinone] 1 alpha subcomplex assembly factor 2 (NDUFAF2) of Bos taurus (Bovine).